Consider the following 1320-residue polypeptide: MMLRTFTLLLLCIWLNRGMTSMAAVESQPELWIESNYPQAPWENITLWCKSPSRVSSKFLLLKDNTQMTWIHPPYKTFQVSFFIGALTESNTGLYRCCYWNEKGWSKPSKILELEAPGQLPKPIFWIQAETPPFPGCNVNILCHGWLQDLVFMLFKEGYTEPIDYQVPTGTMAIFSIDNLAPENEGIYICRTHIQMLPTLWSEPSNPLKLVVAGLYPKPTLTAHPGPILAPGESLSLRCQGPIYGMTFALMRLEDLKKPYYYKKPIKNEAYFYFQALKTQDTGHYLCFYYDGSYRGSLLSDILKIWVTDTFPKTWLLVQPSPVIQMGQNVSLRCGGLMDGVGLALHKKGEEKPLQFLDATSNTGNNSFFLKNVTYRDAGIYSCHYYLTWKTSIKMATYNTVELIVVAWPSSVFKVGKTITLQCRVSHPVLEFSLEWEETTTFQKFSVDGDFIITNIEGQGTGTYSCSYRIESHANIWSHRSEPLKLVGPAVTGFLPWNSILNEAIRVSLTVQFLSLLLLVLWLQWKCRRLRLREAWLLGTAQGVAMLVILIALLCCGLCNGALTEEIEIIMPTPKPELWAETNFPQAPWKNVTLWCRSPSGSTKEFVLLKDGTGWIATRPASEQVRAAFPLGALTQSHTGSYHCHSWEEMAVSEPSEALELVGTDILPKPVISASLPIRGQELQIRCKGWLEGLGFALYKMGEQEPVQQLGAVGREAFFTIQRMEDKEEGNYSCRTHTEKQPFKWSEPSAPLELVIKELYPKPFFKTWASPVVTPGSRVTFNCSTSREHMSFILYKDGNEIASSDPVWGNPGTSTAHFLIISVGIGDGGNYSCRYYDFSIWSEPSDPVELIVTEFYPKPTLLAQPGPVVLPGKNVTLRCQGIFQGMRFALLQEGAHAPLQFQSASGTSVDFLLHTVGAEDFGNYSCVYYETTMSNRGSYLSTPLMIWVTDTFPRPWLSAEPSSVVTMGQNVTLWCQGPVHGVGYILHKEGEATSMQLWDSTSNEGAFPIINISGASIGRYSCCYHPDWMSPIKIQPSNTLELIVTGLLPKPSLLVQPGPMVVPGENMTFQCQGELPDSTFVLLKEGTQQPIEQQRPSGYRADFWMPVVRDQDSGVYSCVYYLDSAPLVASNHSNSLEIWVTDKPPKPSLSAWPSTVFKLGKDITLQCRGPLPGVEFVLEHDGEEAPQQFSEDGDFVIGNMEGKGIGNYSCSYRLQAYPDIWSEPSDSLELVGAAGPVAQECTVGNIVRSTLIVVVVVALGIVLAIEWKKWPRLRTRGSETDGRDQTIVLEECNQDGEPGTATNSPSSALQGVSVEQTVPI.

The signal sequence occupies residues 1 to 18 (MMLRTFTLLLLCIWLNRG). At 19–504 (MTSMAAVESQ…LPWNSILNEA (486 aa)) the chain is on the extracellular side. Ig-like C2-type domains follow at residues 29 to 113 (PELW…KILE), 115 to 212 (EAPG…KLVV), 224 to 308 (HPGP…IWVT), 312 to 399 (PKTW…ATYN), and 401 to 482 (VELI…HRSE). Residue N44 is glycosylated (N-linked (GlcNAc...) asparagine). An intrachain disulfide couples C49 to C97. Residues N329, N365, and N372 are each glycosylated (N-linked (GlcNAc...) asparagine). Cystine bridges form between C334-C383 and C423-C466. The chain crosses the membrane as a helical span at residues 505–525 (IRVSLTVQFLSLLLLVLWLQW). The Cytoplasmic portion of the chain corresponds to 526 to 534 (KCRRLRLRE). Residues 535–555 (AWLLGTAQGVAMLVILIALLC) traverse the membrane as a helical segment. Residues 556–1320 (CGLCNGALTE…GVSVEQTVPI (765 aa)) are Extracellular-facing. Ig-like C2-type domains follow at residues 572–665 (PTPK…VGTD), 662–756 (VGTD…ELVI), 761–853 (PKPF…LIVT), 857–942 (PKPT…YLST), 949–1044 (TDTF…ELIV), 1049–1134 (PKPS…NHSN), and 1145–1226 (PKPS…EPSD). N-linked (GlcNAc...) asparagine glycosylation is found at N591, N731, N782, N830, N874, N923, N970, N1011, and N1066. An intrachain disulfide couples C783 to C833. A disulfide bond links C879 and C926. A disulfide bond links C1071 and C1118. N-linked (GlcNAc...) asparagine glycosylation is found at N1131 and N1207. Residues C1167 and C1210 are joined by a disulfide bond.

In terms of assembly, interacts with INHA; the interaction is not confirmed by standard receptor binding assays. Interacts with ACVR1B; the interaction appears to be ligand-dependent as it is diminished by inhibin B and activin A. Interacts with ACVR2A, ACVR2B, ACVRL1 and BMPR1B. Interacts with HECTD1. Expressed in pituitary gland, testis and liver. Isoform 2 is expressed pituitary gland and testis.

The protein resides in the membrane. It localises to the secreted. Its function is as follows. Seems to be a coreceptor in inhibin signaling, but seems not to be a high-affinity inhibin receptor. Antagonizes activin A signaling in the presence or absence of inhibin B. Necessary to mediate a specific antagonistic effect of inhibin B on activin-stimulated transcription. The polypeptide is Immunoglobulin superfamily member 1 (Igsf1) (Rattus norvegicus (Rat)).